We begin with the raw amino-acid sequence, 125 residues long: Small ribosomal subunit protein eS8 (125 aa).

The protein belongs to the eukaryotic ribosomal protein eS8 family. As to quaternary structure, part of the 30S ribosomal subunit.

This chain is Small ribosomal subunit protein eS8, found in Methanocorpusculum labreanum (strain ATCC 43576 / DSM 4855 / Z).